Reading from the N-terminus, the 324-residue chain is tRNA U34 carboxymethyltransferase (324 aa).

Residues K92, W106, K111, G131, 153–155 (DPT), 182–183 (IE), M197, Y201, and R316 contribute to the carboxy-S-adenosyl-L-methionine site.

Belongs to the class I-like SAM-binding methyltransferase superfamily. CmoB family. Homotetramer.

The enzyme catalyses carboxy-S-adenosyl-L-methionine + 5-hydroxyuridine(34) in tRNA = 5-carboxymethoxyuridine(34) in tRNA + S-adenosyl-L-homocysteine + H(+). Functionally, catalyzes carboxymethyl transfer from carboxy-S-adenosyl-L-methionine (Cx-SAM) to 5-hydroxyuridine (ho5U) to form 5-carboxymethoxyuridine (cmo5U) at position 34 in tRNAs. The chain is tRNA U34 carboxymethyltransferase from Proteus mirabilis (strain HI4320).